The following is a 73-amino-acid chain: Translation initiation factor IF-1 (73 aa).

The 72-residue stretch at 1-72 (MSKDDLIQFT…TKGRVILRHQ (72 aa)) folds into the S1-like domain.

The protein belongs to the IF-1 family. In terms of assembly, component of the 30S ribosomal translation pre-initiation complex which assembles on the 30S ribosome in the order IF-2 and IF-3, IF-1 and N-formylmethionyl-tRNA(fMet); mRNA recruitment can occur at any time during PIC assembly.

The protein resides in the cytoplasm. Its function is as follows. One of the essential components for the initiation of protein synthesis. Stabilizes the binding of IF-2 and IF-3 on the 30S subunit to which N-formylmethionyl-tRNA(fMet) subsequently binds. Helps modulate mRNA selection, yielding the 30S pre-initiation complex (PIC). Upon addition of the 50S ribosomal subunit IF-1, IF-2 and IF-3 are released leaving the mature 70S translation initiation complex. This Rickettsia bellii (strain OSU 85-389) protein is Translation initiation factor IF-1.